The sequence spans 579 residues: MVQYELWAALPGASGVALACCFVAAAVALRWSGRRTARGAVVRARQRQRAGLENMDRAAQRFRLQNPDLDSEALLALPLPQLVQKLHSRELAPEAVLFTYVGKAWEVNKGTNCVTSYLADCETQLSQAPRQGLLYGVPVSLKECFTYKGQDSTLGLSLNEGVPAECDSVVVHVLKLQGAVPFVHTNVPQSMFSYDCSNPLFGQTVNPWKSSKSPGGSSGGEGALIGSGGSPLGLGTDIGGSIRFPSSFCGICGLKPTGNRLSKSGLKGCVYGQEAVRLSVGPMARDVESLALCLRALLCEDMFRLDPTVPPLPFREEVYTSSQPLRVGYYETDNYTMPSPAMRRAVLETKQSLEAAGHTLVPFLPSNIPHALETLSTGGLFSDGGHTFLQNFKGDFVDPCLGDLVSILKLPQWLKGLLAFLVKPLLPRLSAFLSNMKSRSAGKLWELQHEIEVYRKTVIAQWRALDLDVVLTPMLAPALDLNAPGRATGAVSYTMLYNCLDFPAGVVPVTTVTAEDEAQMEHYRGYFGDIWDKMLQKGMKKSVGLPVAVQCVALPWQEELCLRFMREVERLMTPEKQSS.

A helical transmembrane segment spans residues 9–29 (ALPGASGVALACCFVAAAVAL). Residues 30–403 (RWSGRRTARG…GDFVDPCLGD (374 aa)) lie on the Cytoplasmic side of the membrane. Residue Lys-142 is the Charge relay system of the active site. Substrate contacts are provided by residues Met-191, Ser-217, and 238 to 241 (IGGS). The active-site Charge relay system is Ser-217. The active-site Acyl-ester intermediate is Ser-241. A Phosphoserine modification is found at Ser-241. An intramembrane segment occupies 404–433 (LVSILKLPQWLKGLLAFLVKPLLPRLSAFL). Residues 434 to 579 (SNMKSRSAGK…RLMTPEKQSS (146 aa)) are Cytoplasmic-facing.

Belongs to the amidase family. Homodimer. As to expression, highly expressed in the brain, small intestine, pancreas, skeletal muscle and testis. Also expressed in the kidney, liver, lung, placenta and prostate.

The protein localises to the endomembrane system. The protein resides in the cytoplasm. It is found in the cytoskeleton. The enzyme catalyses N-(5Z,8Z,11Z,14Z-eicosatetraenoyl)-ethanolamine + H2O = ethanolamine + (5Z,8Z,11Z,14Z)-eicosatetraenoate. It catalyses the reaction (9Z)-octadecenamide + H2O = (9Z)-octadecenoate + NH4(+). It carries out the reaction 2-(5Z,8Z,11Z,14Z-eicosatetraenoyl)-glycerol + H2O = glycerol + (5Z,8Z,11Z,14Z)-eicosatetraenoate + H(+). The catalysed reaction is N-(9Z-octadecenoyl) ethanolamine + H2O = ethanolamine + (9Z)-octadecenoate. The enzyme catalyses N-hexadecanoylethanolamine + H2O = ethanolamine + hexadecanoate. It catalyses the reaction hexadecanamide + H2O = hexadecanoate + NH4(+). It carries out the reaction tetradecamide + H2O = tetradecanoate + NH4(+). The catalysed reaction is N-(9Z-octadecenoyl)-taurine + H2O = taurine + (9Z)-octadecenoate. The enzyme catalyses (9Z,12Z,15Z)-octadecatrienamide + H2O = (9Z,12Z,15Z)-octadecatrienoate + NH4(+). It catalyses the reaction (5Z,8Z,11Z,14Z)-eicosatetraenamide + H2O = (5Z,8Z,11Z,14Z)-eicosatetraenoate + NH4(+). It carries out the reaction (6Z)-octadecenamide + H2O = (6Z)-octadecenoate + NH4(+). The catalysed reaction is (15Z)-tetracosenamide + H2O = (15Z)-tetracosenoate + NH4(+). The enzyme catalyses (8Z,11Z,14Z)-eicosatrienamide + H2O = (8Z,11Z,14Z)-eicosatrienoate + NH4(+). It catalyses the reaction (11Z,14Z,17Z)-eicosatrienamide + H2O = (11Z,14Z,17Z)-eicosatrienoate + NH4(+). It carries out the reaction (11Z,14Z)-eicosadienamide + H2O = (11Z,14Z)-eicosadienoate + NH4(+). The catalysed reaction is (9Z,12Z)-octadecadienamide + H2O = (9Z,12Z)-octadecadienoate + NH4(+). The enzyme catalyses 1-O-methyl-(5Z,8Z,11Z,14Z)-eicosatetraenoate + H2O = methanol + (5Z,8Z,11Z,14Z)-eicosatetraenoate + H(+). It catalyses the reaction (11Z)-eicosenamide + H2O = (11Z)-eicosenoate + NH4(+). It carries out the reaction N-(9Z-hexadecenoyl) ethanolamine + H2O = (9Z)-hexadecenoate + ethanolamine. The catalysed reaction is N-octadecanoyl ethanolamine + H2O = octadecanoate + ethanolamine. The enzyme catalyses N-docosanoyl-ethanolamine + H2O = docosanoate + ethanolamine. It catalyses the reaction N-tetracosanoyl-taurine + H2O = tetracosanoate + taurine. It carries out the reaction N-(15Z-tetracosenoyl)-ethanolamine + H2O = (15Z)-tetracosenoate + ethanolamine. The catalysed reaction is N-docosanoyl-taurine + H2O = docosanoate + taurine. The enzyme catalyses N-(15Z-tetracosenoyl)-taurine + H2O = (15Z)-tetracosenoate + taurine. It catalyses the reaction N-tricosanoyl-taurine + H2O = tricosanoate + taurine. It carries out the reaction (9Z)-octadecenoate + glycine = N-(9Z-octadecenoyl)glycine + H2O. The catalysed reaction is N-(5Z,8Z,11Z,14Z)-eicosatetraenoyl-glycine + H2O = (5Z,8Z,11Z,14Z)-eicosatetraenoate + glycine. The enzyme catalyses N-(5Z,8Z,11Z,14Z-eicosatetraenoyl)-L-serine + H2O = (5Z,8Z,11Z,14Z)-eicosatetraenoate + L-serine. With respect to regulation, inhibited by O-aryl carbamates and alpha-keto heterocycles. Inhibited by trifluoromethyl ketone. Functionally, catalyzes the hydrolysis of endogenous amidated lipids like the sleep-inducing lipid oleamide ((9Z)-octadecenamide), the endocannabinoid anandamide (N-(5Z,8Z,11Z,14Z-eicosatetraenoyl)-ethanolamine), as well as other fatty amides, to their corresponding fatty acids, thereby regulating the signaling functions of these molecules. Hydrolyzes polyunsaturated substrate anandamide preferentially as compared to monounsaturated substrates. It can also catalyze the hydrolysis of the endocannabinoid 2-arachidonoylglycerol (2-(5Z,8Z,11Z,14Z-eicosatetraenoyl)-glycerol). FAAH cooperates with PM20D1 in the hydrolysis of amino acid-conjugated fatty acids such as N-fatty acyl glycine and N-fatty acyl-L-serine, thereby acting as a physiological regulator of specific subsets of intracellular, but not of extracellular, N-fatty acyl amino acids. In Homo sapiens (Human), this protein is Fatty-acid amide hydrolase 1 (FAAH).